A 159-amino-acid chain; its full sequence is 3-hydroxyacyl-[acyl-carrier-protein] dehydratase FabZ (159 aa).

His-65 is a catalytic residue.

It belongs to the thioester dehydratase family. FabZ subfamily.

It localises to the cytoplasm. It carries out the reaction a (3R)-hydroxyacyl-[ACP] = a (2E)-enoyl-[ACP] + H2O. Its function is as follows. Involved in unsaturated fatty acids biosynthesis. Catalyzes the dehydration of short chain beta-hydroxyacyl-ACPs and long chain saturated and unsaturated beta-hydroxyacyl-ACPs. This Microcystis aeruginosa (strain NIES-843 / IAM M-2473) protein is 3-hydroxyacyl-[acyl-carrier-protein] dehydratase FabZ.